We begin with the raw amino-acid sequence, 97 residues long: Protein RnfH (97 aa).

The protein belongs to the UPF0125 (RnfH) family.

The sequence is that of Protein RnfH from Halorhodospira halophila (strain DSM 244 / SL1) (Ectothiorhodospira halophila (strain DSM 244 / SL1)).